A 256-amino-acid polypeptide reads, in one-letter code: Dihydromonacolin L-[lovastatin nonaketide synthase] thioesterase (256 aa).

Active-site charge relay system residues include serine 122, aspartate 201, and histidine 229.

The protein belongs to the LovG family.

It catalyses the reaction dihydromonacolin L-[lovastatin nonaketide synthase] + H2O = holo-[lovastatin nonaketide synthase] + dihydromonacolin L carboxylate + H(+). It functions in the pathway polyketide biosynthesis; lovastatin biosynthesis. Functionally, esterase; part of the gene cluster that mediates the biosynthesis of lovastatin (also known as mevinolin, mevacor or monacolin K), a hypolipidemic inhibitor of (3S)-hydroxymethylglutaryl-coenzyme A (HMG-CoA) reductase (HMGR). The first step in the biosynthesis of lovastatin is the production of dihydromonacolin L acid by the lovastatin nonaketide synthase lovB and the trans-acting enoyl reductase lovC via condensation of one acetyl-CoA unit and 8 malonyl-CoA units. Dihydromonacolin L acid is released from lovB by the thioesterase lovG. Next, dihydromonacolin L acid is oxidized by the dihydromonacolin L monooxygenase lovA twice to form monacolin J acid. The 2-methylbutyrate moiety of lovastatin is synthesized by the lovastatin diketide synthase lovF via condensation of one acetyl-CoA unit and one malonyl-CoA unit. Finally, the covalent attachment of this moiety to monacolin J acid is catalyzed by the transesterase lovD to yield lovastatin. LovD has broad substrate specificity and can also convert monacolin J to simvastatin using alpha-dimethylbutanoyl-S-methyl-3-mercaptopropionate (DMB-S-MMP) as the thioester acyl donor, and can also catalyze the reverse reaction and function as hydrolase in vitro. LovD has much higher activity with LovF-bound 2-methylbutanoate than with free diketide substrates. In terms of biological role, esterase that catalyzes the release of covalently bound dihydromonacolin L from LovB during lovastatin biosynthesis. This is Dihydromonacolin L-[lovastatin nonaketide synthase] thioesterase from Aspergillus terreus.